A 185-amino-acid chain; its full sequence is Ribosome-recycling factor (185 aa).

It belongs to the RRF family.

The protein localises to the cytoplasm. Responsible for the release of ribosomes from messenger RNA at the termination of protein biosynthesis. May increase the efficiency of translation by recycling ribosomes from one round of translation to another. The sequence is that of Ribosome-recycling factor from Pseudarthrobacter chlorophenolicus (strain ATCC 700700 / DSM 12829 / CIP 107037 / JCM 12360 / KCTC 9906 / NCIMB 13794 / A6) (Arthrobacter chlorophenolicus).